Consider the following 389-residue polypeptide: Succinate--CoA ligase [ADP-forming] subunit beta (389 aa).

Residues 9–244 (KQLFAEYGLP…PSQEDEREAH (236 aa)) enclose the ATP-grasp domain. Residues Lys-46, 53 to 55 (GRG), Glu-99, Thr-102, and Glu-107 each bind ATP. Residues Asn-199 and Asp-213 each contribute to the Mg(2+) site. Substrate is bound by residues Asn-264 and 321–323 (GIV).

This sequence belongs to the succinate/malate CoA ligase beta subunit family. In terms of assembly, heterotetramer of two alpha and two beta subunits. Mg(2+) is required as a cofactor.

The catalysed reaction is succinate + ATP + CoA = succinyl-CoA + ADP + phosphate. The enzyme catalyses GTP + succinate + CoA = succinyl-CoA + GDP + phosphate. The protein operates within carbohydrate metabolism; tricarboxylic acid cycle; succinate from succinyl-CoA (ligase route): step 1/1. In terms of biological role, succinyl-CoA synthetase functions in the citric acid cycle (TCA), coupling the hydrolysis of succinyl-CoA to the synthesis of either ATP or GTP and thus represents the only step of substrate-level phosphorylation in the TCA. The beta subunit provides nucleotide specificity of the enzyme and binds the substrate succinate, while the binding sites for coenzyme A and phosphate are found in the alpha subunit. This is Succinate--CoA ligase [ADP-forming] subunit beta from Teredinibacter turnerae (strain ATCC 39867 / T7901).